The sequence spans 133 residues: ATP synthase epsilon chain (133 aa).

Belongs to the ATPase epsilon chain family. As to quaternary structure, F-type ATPases have 2 components, CF(1) - the catalytic core - and CF(0) - the membrane proton channel. CF(1) has five subunits: alpha(3), beta(3), gamma(1), delta(1), epsilon(1). CF(0) has three main subunits: a, b and c.

Its subcellular location is the cell membrane. Produces ATP from ADP in the presence of a proton gradient across the membrane. The chain is ATP synthase epsilon chain (atpC) from Clostridium acetobutylicum (strain ATCC 824 / DSM 792 / JCM 1419 / IAM 19013 / LMG 5710 / NBRC 13948 / NRRL B-527 / VKM B-1787 / 2291 / W).